We begin with the raw amino-acid sequence, 172 residues long: Large ribosomal subunit protein uL10 (172 aa).

This sequence belongs to the universal ribosomal protein uL10 family. As to quaternary structure, part of the ribosomal stalk of the 50S ribosomal subunit. The N-terminus interacts with L11 and the large rRNA to form the base of the stalk. The C-terminus forms an elongated spine to which L12 dimers bind in a sequential fashion forming a multimeric L10(L12)X complex.

Forms part of the ribosomal stalk, playing a central role in the interaction of the ribosome with GTP-bound translation factors. The chain is Large ribosomal subunit protein uL10 from Francisella tularensis subsp. holarctica (strain FTNF002-00 / FTA).